The following is a 397-amino-acid chain: Nuclear pore complex-interacting protein family member B2 (397 aa).

The segment at 256–397 (NRMGHQPPPP…KLRTGHCTQA (142 aa)) is disordered. Positions 267 to 277 (QQHSITDNSLS) are enriched in polar residues. The span at 278 to 287 (LKTPPECLLT) shows a compositional bias: low complexity. Residues 382–391 (KRRRLSKLRT) show a composition bias toward basic residues.

Belongs to the NPIP family.

Its subcellular location is the nucleus. The sequence is that of Nuclear pore complex-interacting protein family member B2 from Homo sapiens (Human).